A 97-amino-acid polypeptide reads, in one-letter code: uncharacterized protein (97 aa).

The segment at 72 to 97 is disordered; sequence TVERKRSEHTNSRKKDPSAYTWSDVK. Over residues 73 to 88 the composition is skewed to basic and acidic residues; the sequence is VERKRSEHTNSRKKDP.

The protein belongs to the chlamydial CPn_0121/CT_031/TC_0300 family.

This is an uncharacterized protein from Chlamydia pneumoniae (Chlamydophila pneumoniae).